A 274-amino-acid polypeptide reads, in one-letter code: Probable formate transporter (274 aa).

Helical transmembrane passes span 31–51, 62–82, 118–138, 176–196, 200–220, 226–246, and 248–268; these read IVLSFLAGAYIAFGGLLAEVV, AGLVKLVFGAVFPVGLMLVVI, VFNLVGAVFVAYFLAVATGIL, AFWRAVGCNWLVCLAVYLAIA, IIGKIWGIWFPIFAFVAIGFE, MFFIPVGIFLGGVTWSQFFMN, and LIPVTLGNIVGGAIFVACLYW.

This sequence belongs to the FNT transporter (TC 1.A.16) family.

The protein resides in the cell membrane. May act as a formate transporter. The polypeptide is Probable formate transporter (fdhC) (Methanothermobacter thermautotrophicus (Methanobacterium thermoformicicum)).